Reading from the N-terminus, the 284-residue chain is Hydrogenase expression/formation protein HupQ (284 aa).

The tract at residues 1-23 (MIGTQSILPPGFGPGSHGEEDRL) is disordered.

It belongs to the HupH/HyaF family.

This Azotobacter chroococcum mcd 1 protein is Hydrogenase expression/formation protein HupQ (hupQ).